Here is a 430-residue protein sequence, read N- to C-terminus: Histidinol dehydrogenase (430 aa).

Residues tyrosine 130, glutamine 191, and asparagine 214 each coordinate NAD(+). Serine 237, glutamine 259, and histidine 262 together coordinate substrate. Glutamine 259 and histidine 262 together coordinate Zn(2+). Catalysis depends on proton acceptor residues glutamate 327 and histidine 328. Substrate contacts are provided by histidine 328, aspartate 361, glutamate 415, and histidine 420. Aspartate 361 contributes to the Zn(2+) binding site. Histidine 420 is a Zn(2+) binding site.

Belongs to the histidinol dehydrogenase family. Zn(2+) serves as cofactor.

It catalyses the reaction L-histidinol + 2 NAD(+) + H2O = L-histidine + 2 NADH + 3 H(+). It participates in amino-acid biosynthesis; L-histidine biosynthesis; L-histidine from 5-phospho-alpha-D-ribose 1-diphosphate: step 9/9. Functionally, catalyzes the sequential NAD-dependent oxidations of L-histidinol to L-histidinaldehyde and then to L-histidine. In Brucella suis biovar 1 (strain 1330), this protein is Histidinol dehydrogenase.